The sequence spans 204 residues: dITP/XTP pyrophosphatase (204 aa).

S8–K13 lines the substrate pocket. Positions 41 and 76 each coordinate Mg(2+). Residue D76 is the Proton acceptor of the active site. Substrate-binding positions include S77, F159–D162, K182, and H187–R188.

The protein belongs to the HAM1 NTPase family. As to quaternary structure, homodimer. The cofactor is Mg(2+).

It catalyses the reaction XTP + H2O = XMP + diphosphate + H(+). The enzyme catalyses dITP + H2O = dIMP + diphosphate + H(+). It carries out the reaction ITP + H2O = IMP + diphosphate + H(+). Its function is as follows. Pyrophosphatase that catalyzes the hydrolysis of nucleoside triphosphates to their monophosphate derivatives, with a high preference for the non-canonical purine nucleotides XTP (xanthosine triphosphate), dITP (deoxyinosine triphosphate) and ITP. Seems to function as a house-cleaning enzyme that removes non-canonical purine nucleotides from the nucleotide pool, thus preventing their incorporation into DNA/RNA and avoiding chromosomal lesions. The polypeptide is dITP/XTP pyrophosphatase (Clostridium perfringens (strain 13 / Type A)).